The sequence spans 236 residues: Lipoprotein NlpE (236 aa).

The N-terminal stretch at 1-20 (MVKKAIVTAMAVISLFTLMG) is a signal peptide. C21 carries N-palmitoyl cysteine lipidation. C21 carries the S-diacylglycerol cysteine lipid modification. Positions 21–100 (CNNRAEVDTL…WARTADKLVL (80 aa)) are N-terminal domain. Residues 21-236 (CNNRAEVDTL…PNQDCSSLGQ (216 aa)) are Periplasmic-facing. The CXXC motif lies at 51–54 (CADC). Positions 126–236 (PIESQFNYTL…PNQDCSSLGQ (111 aa)) are C-terminal domain. The segment at 144 to 156 (MTPMTLRGMYFYM) is could contain a copper-binding motif. An intrachain disulfide couples C165 to C231.

In terms of assembly, probably exists as a monomer in vivo, can however form homodimers which swap domains. Palmitoylated. Post-translationally, seems to only form a disulfide bond between Cys-165 and Cys-231. The 2 other cysteine residues may however be chemically active.

It localises to the cell outer membrane. Functionally, involved in copper homeostasis, could be involved in both copper efflux and the delivery of copper to copper-dependent enzymes. Required for efficient binding of stationary phase cells to hydrophobic surfaces, part of the process of biofilm formation. Functions during envelope stress responses; when overproduced induces degP through the activation of the two-component envelope stress response system CpxA/CpxR. DegP induction seems to require membrane anchoring of this protein. Structural changes and/or interaction of the CXXC motif with its environment may lead to activation of the Cpx stress response. The sequence is that of Lipoprotein NlpE from Escherichia coli (strain K12).